Here is a 595-residue protein sequence, read N- to C-terminus: Myb-like protein D (595 aa).

4 disordered regions span residues 1–47 (MQQQ…NGLV), 55–74 (QQYQDDQNDSFDDDSMDEGE), 82–266 (DESQ…NNRK), and 319–445 (VLQK…IWTQ). Positions 19–47 (DNYNNNNSNINTNNNNSINDYENQNNGLV) are enriched in low complexity. Over residues 60 to 74 (DQNDSFDDDSMDEGE) the composition is skewed to acidic residues. 2 stretches are compositionally biased toward low complexity: residues 90–212 (NNNN…ENNN) and 225–264 (NNNNNNNNNNNNNNNNNNNNNNNNKNNNNNNNNNNNNNNN). Positions 324-348 (TLNRNRSRSRSRSNSRSHSRSRSRS) are enriched in basic residues. Composition is skewed to low complexity over residues 349–368 (RSLSSISRSRSRSRLIYSRS) and 376–420 (NNNN…NNNN). Residues 423-434 (RKSEDDNQDDGK) are compositionally biased toward basic and acidic residues. The HTH myb-type domain occupies 435–489 (KKHRKNAIWTQEEDEKMAQLYNKYGKSWKAIHSHFDDKTREQVQSHGQYLIRIGK). The H-T-H motif DNA-binding region spans 462–485 (WKAIHSHFDDKTREQVQSHGQYLI). The segment at 494 to 595 (HRDGRKERRK…NSSNYVNNDN (102 aa)) is disordered. Low complexity predominate over residues 517-595 (QQNQQNNNNN…NSSNYVNNDN (79 aa)).

The protein localises to the nucleus. This is Myb-like protein D (mybD) from Dictyostelium discoideum (Social amoeba).